Here is a 140-residue protein sequence, read N- to C-terminus: Large-conductance mechanosensitive channel (140 aa).

2 helical membrane passes run 16–36 (VIDL…VTAL) and 84–104 (INTV…VKLI).

This sequence belongs to the MscL family. As to quaternary structure, homopentamer.

The protein resides in the cell inner membrane. Its function is as follows. Channel that opens in response to stretch forces in the membrane lipid bilayer. May participate in the regulation of osmotic pressure changes within the cell. In Xanthomonas oryzae pv. oryzae (strain MAFF 311018), this protein is Large-conductance mechanosensitive channel.